We begin with the raw amino-acid sequence, 448 residues long: Trigger factor (448 aa).

The PPIase FKBP-type domain maps to 167–253; the sequence is GSIVRVDFVE…VKDIKRRDIP (87 aa).

It belongs to the FKBP-type PPIase family. Tig subfamily.

Its subcellular location is the cytoplasm. It carries out the reaction [protein]-peptidylproline (omega=180) = [protein]-peptidylproline (omega=0). In terms of biological role, involved in protein export. Acts as a chaperone by maintaining the newly synthesized protein in an open conformation. Functions as a peptidyl-prolyl cis-trans isomerase. This Borrelia duttonii (strain Ly) protein is Trigger factor.